The chain runs to 323 residues: Prenyl transferase (323 aa).

Positions 46, 49, and 81 each coordinate isopentenyl diphosphate. Residues Asp-88 and Asp-92 each contribute to the Mg(2+) site. Arg-97 contributes to the an all-trans-polyprenyl diphosphate binding site. Arg-98 is a binding site for isopentenyl diphosphate. 3 residues coordinate an all-trans-polyprenyl diphosphate: Lys-174, Thr-175, and Gln-212.

The protein belongs to the FPP/GGPP synthase family. The cofactor is Mg(2+).

The protein resides in the plastid. It is found in the chloroplast. Functionally, possible role in synthesis of the nonaprenyl side chain of plastoquinone or in synthesis of other prenyl chains such as undekaprenyl pyrophosphate. This is Prenyl transferase (preA) from Porphyra purpurea (Red seaweed).